A 156-amino-acid chain; its full sequence is Gene 55 protein (156 aa).

The disordered stretch occupies residues 132 to 156; that stretch reads KRRWSGGNASSHEERMRGPFTEVAE.

The chain is Gene 55 protein (55) from Mycobacterium phage L5 (Mycobacteriophage L5).